The chain runs to 211 residues: Molybdenum cofactor guanylyltransferase (211 aa).

GTP is bound by residues 12-14 (LAG), Lys25, Asn53, Asp71, and Asp101. Mg(2+) is bound at residue Asp101.

The protein belongs to the MobA family. Monomer. The cofactor is Mg(2+).

The protein localises to the cytoplasm. The catalysed reaction is Mo-molybdopterin + GTP + H(+) = Mo-molybdopterin guanine dinucleotide + diphosphate. In terms of biological role, transfers a GMP moiety from GTP to Mo-molybdopterin (Mo-MPT) cofactor (Moco or molybdenum cofactor) to form Mo-molybdopterin guanine dinucleotide (Mo-MGD) cofactor. This is Molybdenum cofactor guanylyltransferase from Acidovorax sp. (strain JS42).